The primary structure comprises 1088 residues: RNA-directed RNA polymerase (1088 aa).

The region spanning 501–687 (LSYGDVTRFL…AKRYIAGGKI (187 aa)) is the RdRp catalytic domain.

The protein belongs to the reoviridae RNA-directed RNA polymerase family. Interacts with VP3 (Potential). Interacts with VP2; this interaction activates VP1. Interacts with NSP5; this interaction is probably necessary for the formation of functional virus factories. Interacts with NSP2; this interaction is weak. Requires Mg(2+) as cofactor.

The protein resides in the virion. It catalyses the reaction RNA(n) + a ribonucleoside 5'-triphosphate = RNA(n+1) + diphosphate. Functionally, RNA-directed RNA polymerase that is involved in both transcription and genome replication. Together with VP3 capping enzyme, forms an enzyme complex positioned near the channels situated at each of the five-fold vertices of the core. Following infection, the outermost layer of the virus is lost, leaving a double-layered particle (DLP) made up of the core and VP6 shell. VP1 then catalyzes the transcription of fully conservative plus-strand genomic RNAs that are extruded through the DLP's channels into the cytoplasm where they function as mRNAs for translation of viral proteins. One copy of each of the viral (+)RNAs is also recruited during core assembly, together with newly synthesized polymerase complexes and VP2. The polymerase of these novo-formed particles catalyzes the synthesis of complementary minus-strands leading to dsRNA formation. To do so, the polymerase specifically recognizes and binds 4 bases 5'-UGUG-3' in the conserved 3'-sequence of plus-strand RNA templates. VP2 presumably activates the autoinhibited VP1-RNA complex to coordinate packaging and genome replication. Once dsRNA synthesis is complete, the polymerase switches to the transcriptional mode, thus providing secondary transcription. This Rotavirus A (strain RVA/Human/United States/Wa/1974/G1P1A[8]) (RV-A) protein is RNA-directed RNA polymerase.